A 40-amino-acid polypeptide reads, in one-letter code: U2-ctenitoxin-Pr1a (40 aa).

4 disulfides stabilise this stretch: cysteine 2-cysteine 17, cysteine 9-cysteine 22, cysteine 16-cysteine 32, and cysteine 24-cysteine 30.

Expressed by the venom gland.

It is found in the secreted. Its function is as follows. Neurotoxin. This Phoneutria reidyi (Brazilian Amazonian armed spider) protein is U2-ctenitoxin-Pr1a.